A 132-amino-acid chain; its full sequence is Fatty acid-binding protein, intestinal (132 aa).

At Ala-2 the chain carries N-acetylalanine. Positions 83 and 107 each coordinate hexadecanoate. Residues Trp-83 and Arg-107 each contribute to the tetradecanoate site.

The protein belongs to the calycin superfamily. Fatty-acid binding protein (FABP) family. As to expression, expressed in the small intestine and at much lower levels in the large intestine. Highest expression levels in the jejunum.

Its subcellular location is the cytoplasm. Functionally, FABPs are thought to play a role in the intracellular transport of long-chain fatty acids and their acyl-CoA esters. FABP2 is probably involved in triglyceride-rich lipoprotein synthesis. Binds saturated long-chain fatty acids with a high affinity, but binds with a lower affinity to unsaturated long-chain fatty acids. FABP2 may also help maintain energy homeostasis by functioning as a lipid sensor. The polypeptide is Fatty acid-binding protein, intestinal (FABP2) (Homo sapiens (Human)).